The sequence spans 377 residues: MTDDESESVLSDSHEGSELELPVIQLCGLVEELSYVNSALKTETEMFEKYYAKLEPRDQRPPRLSEIKISAADYAQFRGRRRSKSRTGMDRGVGLTADQKLELVQKEVADMKDDLRHTRANAERDLQHHEAIIEEAEIRWSEVSREVHEFEKDILKAISKKKGSILATQKVMKYIEDMNRRRDNMKEKLRLKNVSLKVQRKKMLLQLRQKEEVSEALHDVDFQQLKIENAQFLETIEARNQELTQLKLSSGNTLQVLNAYKSKLHKAMEIYLNLDKEILLRKELLEKIEKETLQVEEDRAKAEAVNKRLRKQLAEFRAPQVMTYVREKILNADLEKSIRMWERKVEIAEMSLKGHRKAWNRMKITNEQLQADYLAGK.

2 coiled-coil regions span residues 95 to 243 and 280 to 354; these read LTAD…NQEL and LRKE…SLKG.

It belongs to the CFAP263 family. As to quaternary structure, forms a complex with CFAP184; the interaction is required for functional activity in cilia. Interacts with HAP1 and PCM1.

It localises to the cytoplasm. Its subcellular location is the cytoskeleton. The protein localises to the microtubule organizing center. It is found in the centrosome. The protein resides in the centriolar satellite. It localises to the cell projection. Its subcellular location is the cilium. Functionally, component of centriolar satellites contributing to primary cilium formation. In complex with CFAP263, acts as a regulator of ciliary beating that connects radial spoke 3 (RS3) to the inner dynein arm (IDA) and the nexin-dynein regulatory complex (N-DRC). The complex is positioned parallel to N-DRC and forms a connection between the arch at the base of RS3, the IDA tail and N-DRC. The polypeptide is Cilia- and flagella-associated protein 263 (Homo sapiens (Human)).